A 175-amino-acid polypeptide reads, in one-letter code: FMN reductase (NADH) RutF (175 aa).

It belongs to the non-flavoprotein flavin reductase family. RutF subfamily.

The catalysed reaction is FMNH2 + NAD(+) = FMN + NADH + 2 H(+). Catalyzes the reduction of FMN to FMNH2 which is used to reduce pyrimidine by RutA via the Rut pathway. In Serratia proteamaculans (strain 568), this protein is FMN reductase (NADH) RutF.